The primary structure comprises 73 residues: Large ribosomal subunit protein bL28 (73 aa).

It belongs to the bacterial ribosomal protein bL28 family.

The sequence is that of Large ribosomal subunit protein bL28 from Fervidobacterium nodosum (strain ATCC 35602 / DSM 5306 / Rt17-B1).